Here is a 236-residue protein sequence, read N- to C-terminus: Leucyl/phenylalanyl-tRNA--protein transferase (236 aa).

It belongs to the L/F-transferase family.

Its subcellular location is the cytoplasm. It carries out the reaction N-terminal L-lysyl-[protein] + L-leucyl-tRNA(Leu) = N-terminal L-leucyl-L-lysyl-[protein] + tRNA(Leu) + H(+). The enzyme catalyses N-terminal L-arginyl-[protein] + L-leucyl-tRNA(Leu) = N-terminal L-leucyl-L-arginyl-[protein] + tRNA(Leu) + H(+). It catalyses the reaction L-phenylalanyl-tRNA(Phe) + an N-terminal L-alpha-aminoacyl-[protein] = an N-terminal L-phenylalanyl-L-alpha-aminoacyl-[protein] + tRNA(Phe). Its function is as follows. Functions in the N-end rule pathway of protein degradation where it conjugates Leu, Phe and, less efficiently, Met from aminoacyl-tRNAs to the N-termini of proteins containing an N-terminal arginine or lysine. In Shewanella sp. (strain MR-4), this protein is Leucyl/phenylalanyl-tRNA--protein transferase.